The following is a 270-amino-acid chain: 4-hydroxy-tetrahydrodipicolinate reductase (270 aa).

Residues 9 to 14 (GAGGRM) and E35 contribute to the NAD(+) site. R36 contributes to the NADP(+) binding site. NAD(+)-binding positions include 99 to 101 (GTT) and 123 to 126 (ASNF). H156 acts as the Proton donor/acceptor in catalysis. H157 provides a ligand contact to (S)-2,3,4,5-tetrahydrodipicolinate. Catalysis depends on K160, which acts as the Proton donor. Residue 166–167 (GT) coordinates (S)-2,3,4,5-tetrahydrodipicolinate.

The protein belongs to the DapB family.

The protein localises to the cytoplasm. The catalysed reaction is (S)-2,3,4,5-tetrahydrodipicolinate + NAD(+) + H2O = (2S,4S)-4-hydroxy-2,3,4,5-tetrahydrodipicolinate + NADH + H(+). It catalyses the reaction (S)-2,3,4,5-tetrahydrodipicolinate + NADP(+) + H2O = (2S,4S)-4-hydroxy-2,3,4,5-tetrahydrodipicolinate + NADPH + H(+). It functions in the pathway amino-acid biosynthesis; L-lysine biosynthesis via DAP pathway; (S)-tetrahydrodipicolinate from L-aspartate: step 4/4. Functionally, catalyzes the conversion of 4-hydroxy-tetrahydrodipicolinate (HTPA) to tetrahydrodipicolinate. This is 4-hydroxy-tetrahydrodipicolinate reductase from Haemophilus influenzae (strain ATCC 51907 / DSM 11121 / KW20 / Rd).